A 161-amino-acid polypeptide reads, in one-letter code: Urocortin-3 (161 aa).

A signal peptide spans 1–21 (MLMPVHFLLLLLLLLGGPRTG). Residues 22–118 (LPHKFYKAKP…QDTAKSPHRT (97 aa)) constitute a propeptide that is removed on maturation. The tract at residues 64-118 (SRDASSGEEEEGKEKKTFPISGARGGARGTRYRYVSQAQPRGKPRQDTAKSPHRT) is disordered. Isoleucine amide is present on I157.

This sequence belongs to the sauvagine/corticotropin-releasing factor/urotensin I family. As to quaternary structure, binds with high affinity to CRF receptors 2-alpha and 2-beta.

It is found in the secreted. In terms of biological role, suppresses food intake, delays gastric emptying and decreases heat-induced edema. Might represent an endogenous ligand for maintaining homeostasis after stress. This Homo sapiens (Human) protein is Urocortin-3 (UCN3).